A 293-amino-acid chain; its full sequence is Histamine N-methyltransferase A (293 aa).

Glu28 serves as a coordination point for substrate. S-adenosyl-L-methionine is bound by residues Gly60, Glu89, Gln94, Ser120, and Ile142. A substrate-binding site is contributed by Asn283.

Belongs to the class I-like SAM-binding methyltransferase superfamily. HNMT family. As to quaternary structure, monomer.

Its subcellular location is the cytoplasm. It carries out the reaction histamine + S-adenosyl-L-methionine = N(tau)-methylhistamine + S-adenosyl-L-homocysteine + H(+). Inactivates histamine by N-methylation. Plays an important role in degrading histamine and in regulating the airway response to histamine. In Xenopus laevis (African clawed frog), this protein is Histamine N-methyltransferase A (hnmt-a).